We begin with the raw amino-acid sequence, 47 residues long: Delta-actitoxin-Axm1g (47 aa).

Cystine bridges form between Cys4/Cys44, Cys6/Cys34, and Cys27/Cys45.

Belongs to the sea anemone sodium channel inhibitory toxin family. Type I subfamily.

The protein resides in the secreted. It is found in the nematocyst. The sequence is that of Delta-actitoxin-Axm1g from Anthopleura xanthogrammica (Giant green sea anemone).